The sequence spans 600 residues: Oligopeptide-binding protein OppA (600 aa).

The first 22 residues, M1–A22, serve as a signal peptide directing secretion. Residue C23 is the site of N-palmitoyl cysteine attachment. A lipid anchor (S-diacylglycerol cysteine) is attached at C23.

This sequence belongs to the bacterial solute-binding protein 5 family. As to quaternary structure, the complex is composed of two ATP-binding proteins (OppD and OppF), two transmembrane proteins (OppB and OppC) and a solute-binding protein (OppA).

It localises to the cell membrane. Its function is as follows. Part of the ABC transporter complex OppABCDF involved in the uptake of oligopeptides. This is Oligopeptide-binding protein OppA from Lactococcus lactis subsp. cremoris (strain SK11).